We begin with the raw amino-acid sequence, 258 residues long: Phycoerythrobilin:ferredoxin oxidoreductase (258 aa).

This sequence belongs to the HY2 family.

It catalyses the reaction (3Z)-phycoerythrobilin + oxidized 2[4Fe-4S]-[ferredoxin] = 15,16-dihydrobiliverdin + reduced 2[4Fe-4S]-[ferredoxin] + 2 H(+). Its function is as follows. Catalyzes the two-electron reduction of the C2 and C3(1) diene system of 15,16-dihydrobiliverdin. This Prochlorococcus marinus (strain NATL1A) protein is Phycoerythrobilin:ferredoxin oxidoreductase.